The following is a 502-amino-acid chain: METDFSLVRKEEEEEEDNRNGMSYLSMEMMKKVSSMAAPMVAVSVSQFLLQVISMVMAGHLDELSLSAVAIATSLTNVTGFSLIVGFAGALDTLCGQAFGAEQFGKIGAYTYSSMLCLLVFCFSISIVWFFMDKLLEIFHQDPLISQLACRYSIWLIPALFGFTLLQPMTRYFQSQGITLPLFVSSLGALCFHIPFCWLLVYKLKFGIVGAALSIGFSYWLNVFLLWIFMRYSALHREMKNLGLQELISSMKQFIALAIPSAMMICLEWWSFEILLLMSGLLPNSKLETSVISICLTTSAVHFVLVNAIGASASTHVSNELGAGNHRAARAAVNSAIFLGGVGALITTITLYSYRKSWGYVFSNEREVVRYATQITPILCLSIFVNSFLAVLSGVARGSGWQRIGGYASLGSYYLVGIPLGWFLCFVMKLRGKGLWIGILIASTIQLIVFALVTFFTNWEQEATKARDRVFEMTPQVKGNQKTQIIVEEDTQVLLNHIAETV.

A run of 12 helical transmembrane segments spans residues 36–56 (MAAP…ISMV), 68–88 (AVAI…VGFA), 112–132 (YSSM…WFFM), 143–163 (PLIS…LFGF), 182–202 (LFVS…LLVY), 208–228 (IVGA…LLWI), 262–282 (AMMI…SGLL), 291–311 (VISI…AIGA), 331–351 (AAVN…TITL), 375–395 (ITPI…LSGV), 408–428 (ASLG…CFVM), and 436–456 (WIGI…VTFF).

Belongs to the multi antimicrobial extrusion (MATE) (TC 2.A.66.1) family.

Its subcellular location is the membrane. The protein is Protein DETOXIFICATION 7 of Arabidopsis thaliana (Mouse-ear cress).